The following is a 446-amino-acid chain: Tubulin alpha chain-like 3 (446 aa).

Residues 1–4 carry the MREC motif motif; the sequence is MREC. Positions 11, 78, 147, 151, 152, 186, 213, and 235 each coordinate GTP. Glutamate 78 serves as a coordination point for Mg(2+). Residue glutamate 261 is part of the active site.

It belongs to the tubulin family. As to quaternary structure, dimer of alpha and beta chains. A typical microtubule is a hollow water-filled tube with an outer diameter of 25 nm and an inner diameter of 15 nM. Alpha-beta heterodimers associate head-to-tail to form protofilaments running lengthwise along the microtubule wall with the beta-tubulin subunit facing the microtubule plus end conferring a structural polarity. Microtubules usually have 13 protofilaments but different protofilament numbers can be found in some organisms and specialized cells. Requires Mg(2+) as cofactor. Some glutamate residues at the C-terminus are polyglutamylated, resulting in polyglutamate chains on the gamma-carboxyl group. Polyglutamylation plays a key role in microtubule severing by spastin (SPAST). SPAST preferentially recognizes and acts on microtubules decorated with short polyglutamate tails: severing activity by SPAST increases as the number of glutamates per tubulin rises from one to eight, but decreases beyond this glutamylation threshold. Glutamylation is also involved in cilia motility. In terms of processing, some glutamate residues at the C-terminus are monoglycylated but not polyglycylated due to the absence of functional TTLL10 in human. Monoglycylation is mainly limited to tubulin incorporated into cilia and flagella axonemes, which is required for their stability and maintenance. Flagella glycylation controls sperm motility. Both polyglutamylation and monoglycylation can coexist on the same protein on adjacent residues, and lowering glycylation levels increases polyglutamylation, and reciprocally.

The protein localises to the cytoplasm. It localises to the cytoskeleton. The enzyme catalyses GTP + H2O = GDP + phosphate + H(+). In terms of biological role, tubulin is the major constituent of microtubules, a cylinder consisting of laterally associated linear protofilaments composed of alpha- and beta-tubulin heterodimers. Microtubules grow by the addition of GTP-tubulin dimers to the microtubule end, where a stabilizing cap forms. Below the cap, tubulin dimers are in GDP-bound state, owing to GTPase activity of alpha-tubulin. The chain is Tubulin alpha chain-like 3 (TUBAL3) from Homo sapiens (Human).